Here is a 257-residue protein sequence, read N- to C-terminus: GTP cyclohydrolase FolE2 (257 aa).

The protein belongs to the GTP cyclohydrolase IV family.

The enzyme catalyses GTP + H2O = 7,8-dihydroneopterin 3'-triphosphate + formate + H(+). It functions in the pathway cofactor biosynthesis; 7,8-dihydroneopterin triphosphate biosynthesis; 7,8-dihydroneopterin triphosphate from GTP: step 1/1. Functionally, converts GTP to 7,8-dihydroneopterin triphosphate. This Syntrophobacter fumaroxidans (strain DSM 10017 / MPOB) protein is GTP cyclohydrolase FolE2.